Reading from the N-terminus, the 316-residue chain is Methionyl-tRNA formyltransferase (316 aa).

110–113 (SLLP) contributes to the (6S)-5,6,7,8-tetrahydrofolate binding site.

Belongs to the Fmt family.

It carries out the reaction L-methionyl-tRNA(fMet) + (6R)-10-formyltetrahydrofolate = N-formyl-L-methionyl-tRNA(fMet) + (6S)-5,6,7,8-tetrahydrofolate + H(+). Attaches a formyl group to the free amino group of methionyl-tRNA(fMet). The formyl group appears to play a dual role in the initiator identity of N-formylmethionyl-tRNA by promoting its recognition by IF2 and preventing the misappropriation of this tRNA by the elongation apparatus. This Halothermothrix orenii (strain H 168 / OCM 544 / DSM 9562) protein is Methionyl-tRNA formyltransferase.